Reading from the N-terminus, the 145-residue chain is Actin-related protein 4A (145 aa).

A disordered region spans residues 47–66 (IDDAANTTEDAKESDKEKGK). The span at 55–64 (EDAKESDKEK) shows a compositional bias: basic and acidic residues.

Belongs to the actin family. ARP4 subfamily. As to expression, expressed in roots, leaves and flowers.

The chain is Actin-related protein 4A (ARP4A) from Arabidopsis thaliana (Mouse-ear cress).